A 127-amino-acid polypeptide reads, in one-letter code: Ribosome-binding factor A (127 aa).

Belongs to the RbfA family. Monomer. Binds 30S ribosomal subunits, but not 50S ribosomal subunits or 70S ribosomes.

Its subcellular location is the cytoplasm. In terms of biological role, one of several proteins that assist in the late maturation steps of the functional core of the 30S ribosomal subunit. Associates with free 30S ribosomal subunits (but not with 30S subunits that are part of 70S ribosomes or polysomes). Required for efficient processing of 16S rRNA. May interact with the 5'-terminal helix region of 16S rRNA. The protein is Ribosome-binding factor A of Stenotrophomonas maltophilia (strain K279a).